We begin with the raw amino-acid sequence, 103 residues long: Large ribosomal subunit protein bL21 (103 aa).

The protein belongs to the bacterial ribosomal protein bL21 family. In terms of assembly, part of the 50S ribosomal subunit. Contacts protein L20.

This protein binds to 23S rRNA in the presence of protein L20. The polypeptide is Large ribosomal subunit protein bL21 (Clostridium kluyveri (strain NBRC 12016)).